A 348-amino-acid polypeptide reads, in one-letter code: Probable dual-specificity RNA methyltransferase RlmN (348 aa).

Glu93 acts as the Proton acceptor in catalysis. In terms of domain architecture, Radical SAM core spans 99–333; that stretch reads TEKRLTACLS…VSFRKSRGLD (235 aa). A disulfide bridge links Cys106 with Cys338. Residues Cys113, Cys117, and Cys120 each contribute to the [4Fe-4S] cluster site. Residues 160–161, Ser190, 219–221, and Asn295 contribute to the S-adenosyl-L-methionine site; these read GE and SLH. Cys338 functions as the S-methylcysteine intermediate in the catalytic mechanism.

It belongs to the radical SAM superfamily. RlmN family. [4Fe-4S] cluster is required as a cofactor.

The protein resides in the cytoplasm. It carries out the reaction adenosine(2503) in 23S rRNA + 2 reduced [2Fe-2S]-[ferredoxin] + 2 S-adenosyl-L-methionine = 2-methyladenosine(2503) in 23S rRNA + 5'-deoxyadenosine + L-methionine + 2 oxidized [2Fe-2S]-[ferredoxin] + S-adenosyl-L-homocysteine. The catalysed reaction is adenosine(37) in tRNA + 2 reduced [2Fe-2S]-[ferredoxin] + 2 S-adenosyl-L-methionine = 2-methyladenosine(37) in tRNA + 5'-deoxyadenosine + L-methionine + 2 oxidized [2Fe-2S]-[ferredoxin] + S-adenosyl-L-homocysteine. Its function is as follows. Specifically methylates position 2 of adenine 2503 in 23S rRNA and position 2 of adenine 37 in tRNAs. This chain is Probable dual-specificity RNA methyltransferase RlmN, found in Prochlorococcus marinus (strain MIT 9312).